The primary structure comprises 106 residues: Secreted RxLR effector protein 18 (106 aa).

The signal sequence occupies residues 1 to 17; sequence MRGSTAMLLAAIALFSS. The RxLR-dEER signature appears at 28–39; sequence RTLRSFEELEER.

It belongs to the RxLR effector family.

It localises to the secreted. The protein resides in the host cell. Functionally, effector that may act as a suppressor of cell death to interrupt plant immunity. I. The chain is Secreted RxLR effector protein 18 from Plasmopara viticola (Downy mildew of grapevine).